The sequence spans 425 residues: DNA replication and repair protein RecF (425 aa).

An ATP-binding site is contributed by 30–37; that stretch reads GPNGHGKT.

It belongs to the RecF family.

Its subcellular location is the cytoplasm. In terms of biological role, the RecF protein is involved in DNA metabolism; it is required for DNA replication and normal SOS inducibility. RecF binds preferentially to single-stranded, linear DNA. It also seems to bind ATP. The protein is DNA replication and repair protein RecF of Corynebacterium jeikeium (strain K411).